The sequence spans 114 residues: Evasin-1 (114 aa).

An N-terminal signal peptide occupies residues 1–20 (MTFKACIAIITALCAMQVIC). Intrachain disulfides connect Cys-32–Cys-53, Cys-49–Cys-90, Cys-66–Cys-95, and Cys-85–Cys-104. N-linked (GlcNAc...) asparagine glycans are attached at residues Asn-39, Asn-54, and Asn-62.

This sequence belongs to the evasin C8 family. Monomer.

It is found in the secreted. Functionally, salivary chemokine-binding protein which shows chemokine neutralizing activity and binds to host chemokines CCL3, CCL4 and CCL18. Binds to CCL3 with 1:1 stoichiometry. The protein is Evasin-1 of Rhipicephalus sanguineus (Brown dog tick).